The following is a 445-amino-acid chain: UDP-glucuronic acid decarboxylase 2 (445 aa).

N-acetylalanine is present on alanine 2. The Cytoplasmic segment spans residues 2-43 (ASELINRRHETDQPTADAYYPKPIKPWFTVTRPMRYMLREQR). The helical; Signal-anchor for type II membrane protein transmembrane segment at 44 to 64 (LIFVLVGIAIATLVFTIFPRS) threads the bilayer. Residues 65 to 445 (TQSTPYSDPF…AATTTKTTSA (381 aa)) are Lumenal-facing. 149–174 (DNFFTGRKENVMHHFSNPNFEMIRHD) provides a ligand contact to NAD(+). Arginine 258 provides a ligand contact to substrate. The active-site Proton acceptor is tyrosine 261. 261-265 (YDEGK) contributes to the NAD(+) binding site. Residue asparagine 290 coordinates substrate. Residue arginine 302 participates in NAD(+) binding. Substrate contacts are provided by residues 303–307 (VVSNF), 320–327 (YGDGKQTR), and 387–391 (DPHKR).

This sequence belongs to the NAD(P)-dependent epimerase/dehydratase family. UDP-glucuronic acid decarboxylase subfamily. As to quaternary structure, homodimer. The cofactor is NAD(+). In terms of tissue distribution, ubiquitous.

The protein localises to the golgi apparatus. It localises to the golgi stack membrane. It carries out the reaction UDP-alpha-D-glucuronate + H(+) = UDP-alpha-D-xylose + CO2. The protein operates within nucleotide-sugar biosynthesis; UDP-alpha-D-xylose biosynthesis; UDP-alpha-D-xylose from UDP-alpha-D-glucuronate: step 1/1. Functionally, catalyzes the NAD-dependent decarboxylation of UDP-glucuronic acid to UDP-xylose. Necessary for the biosynthesis of the core tetrasaccharide in glycosaminoglycan biosynthesis. In Arabidopsis thaliana (Mouse-ear cress), this protein is UDP-glucuronic acid decarboxylase 2 (UXS2).